The primary structure comprises 565 residues: Oxygen-dependent choline dehydrogenase (565 aa).

6–35 contacts FAD; the sequence is DYIIVGAGSAGNTLATRLTEDAGVTVLLLE. His475 functions as the Proton acceptor in the catalytic mechanism.

It belongs to the GMC oxidoreductase family. It depends on FAD as a cofactor.

The catalysed reaction is choline + A = betaine aldehyde + AH2. The enzyme catalyses betaine aldehyde + NAD(+) + H2O = glycine betaine + NADH + 2 H(+). It participates in amine and polyamine biosynthesis; betaine biosynthesis via choline pathway; betaine aldehyde from choline (cytochrome c reductase route): step 1/1. In terms of biological role, involved in the biosynthesis of the osmoprotectant glycine betaine. Catalyzes the oxidation of choline to betaine aldehyde and betaine aldehyde to glycine betaine at the same rate. The sequence is that of Oxygen-dependent choline dehydrogenase from Pseudomonas putida (strain GB-1).